The primary structure comprises 204 residues: N-(5'-phosphoribosyl)anthranilate isomerase (204 aa).

The protein belongs to the TrpF family.

The enzyme catalyses N-(5-phospho-beta-D-ribosyl)anthranilate = 1-(2-carboxyphenylamino)-1-deoxy-D-ribulose 5-phosphate. It participates in amino-acid biosynthesis; L-tryptophan biosynthesis; L-tryptophan from chorismate: step 3/5. This Bacillus cereus (strain ZK / E33L) protein is N-(5'-phosphoribosyl)anthranilate isomerase.